The sequence spans 282 residues: Acyl-CoA-binding domain-containing protein 6 (282 aa).

Residues 1–12 show a composition bias toward polar residues; the sequence is MASSFLPSGATT. The segment at 1 to 34 is disordered; the sequence is MASSFLPSGATTGDSGGELSSGDDSGDVESLQSP. Residues 17-31 are compositionally biased toward low complexity; it reads GELSSGDDSGDVESL. Position 41 is a phosphoserine (Ser41). The 86-residue stretch at 42-127 folds into the ACB domain; the sequence is LPELFEKAAE…VKKLDPSWNP (86 aa). An acyl-CoA contacts are provided by residues 69–73 and Lys95; that span reads YARYK. Ser106 bears the Phosphoserine mark. Tyr114 contacts an acyl-CoA. ANK repeat units lie at residues 191–220 and 224–253; these read EGRT…DINC and EGQT…DPTL.

As to quaternary structure, monomer.

The protein resides in the cytoplasm. Binds long-chain acyl-coenzyme A molecules with a strong preference for unsaturated C18:1-CoA, lower affinity for unsaturated C20:4-CoA, and very weak affinity for saturated C16:0-CoA. Does not bind fatty acids. The sequence is that of Acyl-CoA-binding domain-containing protein 6 (ACBD6) from Bos taurus (Bovine).